The primary structure comprises 307 residues: Bifunctional protein FolD (307 aa).

NADP(+) contacts are provided by residues 165–167 (GRS), Ser-190, and Ile-231.

This sequence belongs to the tetrahydrofolate dehydrogenase/cyclohydrolase family. In terms of assembly, homodimer.

It catalyses the reaction (6R)-5,10-methylene-5,6,7,8-tetrahydrofolate + NADP(+) = (6R)-5,10-methenyltetrahydrofolate + NADPH. The catalysed reaction is (6R)-5,10-methenyltetrahydrofolate + H2O = (6R)-10-formyltetrahydrofolate + H(+). The protein operates within one-carbon metabolism; tetrahydrofolate interconversion. Catalyzes the oxidation of 5,10-methylenetetrahydrofolate to 5,10-methenyltetrahydrofolate and then the hydrolysis of 5,10-methenyltetrahydrofolate to 10-formyltetrahydrofolate. The polypeptide is Bifunctional protein FolD (Koribacter versatilis (strain Ellin345)).